A 949-amino-acid chain; its full sequence is Glycine dehydrogenase (decarboxylating) (949 aa).

Lysine 700 carries the N6-(pyridoxal phosphate)lysine modification.

The protein belongs to the GcvP family. In terms of assembly, the glycine cleavage system is composed of four proteins: P, T, L and H. Pyridoxal 5'-phosphate serves as cofactor.

It catalyses the reaction N(6)-[(R)-lipoyl]-L-lysyl-[glycine-cleavage complex H protein] + glycine + H(+) = N(6)-[(R)-S(8)-aminomethyldihydrolipoyl]-L-lysyl-[glycine-cleavage complex H protein] + CO2. In terms of biological role, the glycine cleavage system catalyzes the degradation of glycine. The P protein binds the alpha-amino group of glycine through its pyridoxal phosphate cofactor; CO(2) is released and the remaining methylamine moiety is then transferred to the lipoamide cofactor of the H protein. This chain is Glycine dehydrogenase (decarboxylating), found in Christiangramia forsetii (strain DSM 17595 / CGMCC 1.15422 / KT0803) (Gramella forsetii).